The chain runs to 178 residues: Gamma-crystallin S (178 aa).

N-acetylserine is present on S2. The interval S2–G5 is N-terminal arm. Beta/gamma crystallin 'Greek key' domains are found at residues T6–G44 and G45–H87. Positions L88 to Q93 are connecting peptide. Beta/gamma crystallin 'Greek key' domains lie at Y94 to D134 and G135 to V177.

Belongs to the beta/gamma-crystallin family. Monomer.

In terms of biological role, crystallins are the dominant structural components of the vertebrate eye lens. This Canis lupus familiaris (Dog) protein is Gamma-crystallin S (CRYGS).